The sequence spans 207 residues: Ribosomal RNA small subunit methyltransferase G (207 aa).

S-adenosyl-L-methionine-binding positions include Gly-76, Gln-81, Val-127–Glu-128, and Arg-141.

This sequence belongs to the methyltransferase superfamily. RNA methyltransferase RsmG family.

Its subcellular location is the cytoplasm. It catalyses the reaction guanosine(527) in 16S rRNA + S-adenosyl-L-methionine = N(7)-methylguanosine(527) in 16S rRNA + S-adenosyl-L-homocysteine. Functionally, specifically methylates the N7 position of guanine in position 527 of 16S rRNA. In Neisseria meningitidis serogroup B (strain ATCC BAA-335 / MC58), this protein is Ribosomal RNA small subunit methyltransferase G.